A 208-amino-acid polypeptide reads, in one-letter code: MFKKPIIIGVTGGSGGGKTSVSRAILDSFPNARIAMIQHDSYYKDQSHMSFEERVKTNYDHPLAFDTDFMIQQLKELLAGRPVDIPIYDYKKHTRSNTTFRQDPQDVIIVEGILVLEDERLRDLMDIKLFVDTDDDIRIIRRIKRDMMERGRSLESIIDQYTSVVKPMYHQFIEPSKRYADIVIPEGVSNVVAIDVINSKIASILGEV.

Residue 12–19 (GGSGGGKT) participates in ATP binding.

Belongs to the uridine kinase family.

The protein localises to the cytoplasm. It catalyses the reaction uridine + ATP = UMP + ADP + H(+). It carries out the reaction cytidine + ATP = CMP + ADP + H(+). The protein operates within pyrimidine metabolism; CTP biosynthesis via salvage pathway; CTP from cytidine: step 1/3. Its pathway is pyrimidine metabolism; UMP biosynthesis via salvage pathway; UMP from uridine: step 1/1. The protein is Uridine kinase of Streptococcus pyogenes serotype M18 (strain MGAS8232).